The chain runs to 265 residues: Bradykinin-potentiating and C-type natriuretic peptides (265 aa).

A signal peptide spans 1 to 23 (MVLSRLAASGLLLLALLALSVDG). Residues 24 to 30 (KPVQQWA) constitute a propeptide that is removed on maturation. Gln31 carries the pyrrolidone carboxylic acid modification. Residues 44-50 (LKVQQWA) constitute a propeptide that is removed on maturation. Gln51 carries the post-translational modification Pyrrolidone carboxylic acid. The propeptide occupies 64-70 (LTVQQWA). Gln71 carries the post-translational modification Pyrrolidone carboxylic acid. The propeptide occupies 81–87 (LTVQQWA). Pyrrolidone carboxylic acid is present on Gln88. The propeptide occupies 100-106 (LEVQQWA). Pyrrolidone carboxylic acid is present on Gln107. A propeptide spanning residues 118-120 (APL) is cleaved from the precursor. Gln121 is modified (pyrrolidone carboxylic acid). Val126 is a propeptide. Gln127 is modified (pyrrolidone carboxylic acid). The propeptide occupies 132–241 (LLQPHESPAS…GGARRLKGLA (110 aa)). The tract at residues 153-211 (GPEAASGVPSAGAEVGRSGSKAPAAPHRLSKSKGAAATSAASRPMRDLRPDGKQARQNW) is disordered. The span at 184-194 (SKGAAATSAAS) shows a compositional bias: low complexity. Basic and acidic residues predominate over residues 196–206 (PMRDLRPDGKQ). Residues Cys249 and Cys265 are joined by a disulfide bond.

It in the N-terminal section; belongs to the bradykinin-potentiating peptide family. The protein in the C-terminal section; belongs to the natriuretic peptide family. Expressed by the venom gland.

The protein resides in the secreted. Its subcellular location is the cytoplasm. It is found in the cytosol. Its function is as follows. Modestly inhibits ACE (with highest affinity for the N-site) and reveals strong bradykinin-potentiating activity. Induces nitric oxide (NO) production depended on muscarinic acetylcholine receptor M1 subtype (CHRM1) and bradykinin B2 receptor (BDKRB2) activation. Both these receptors contribute to the vasodilation induced by this peptide that may have an indirect action on BDKRB2 and a direct agonistic action on CHRM1. Functionally, peptide with several activities. It inhibits the activity of the angiotensin-converting enzyme (ACE) by a preferential interaction with its C-domain. It evokes transient hypotension (-14 mmHg) similar to that evoked by 0.5 ug of bradykinin, when injected alone into rats. It has a high bradykinin-potentiating effect (120%), when 60 nmol of BPP-10c are coinjected with 0.5 ug of bradykinin into rats. Does not affect angiotensin-1 pressor effects. Shows potent and long-lasting antihypertensive activity as well as a reduction of the heart rate. It also binds and dose-dependently promotes the activation of cytosolic argininosuccinate synthase (ASS1), an enzyme that catalyzes the conversion of citrulline, L-aspartate and ATP to argininosuccinate, AMP and pyrophosphate. It also enhances ASS1-dependent arginine production in HEK 293 cells, as well as in spontaneous hypertensive rat (SHR) and Wistar rat plasma. In addition, it induces the production of nitric-oxide (NO) by HUVEC cells via the endothelial nitric-oxide synthase (NOS3), which use arginine as a substrate and produce NO. It has been shown to be internalized by ASS1-expressing endothelial (HUVEC) and kidney (HEK 293) cells, and is detected homogenously distributed within the cell cytoplasm for up to 2 hours. In terms of biological role, has a vasorelaxant activity in rat aortic strips and a diuretic potency in anesthetized rats. May act by activating natriuretic receptors (NPR1 and/or NPR2). The chain is Bradykinin-potentiating and C-type natriuretic peptides from Bothrops insularis (Golden lancehead).